The chain runs to 96 residues: uncharacterized protein (96 aa).

The interval 35–96 is disordered; sequence SPSGEKRSTK…KKFSSPPHPK (62 aa). Over residues 38 to 52 the composition is skewed to basic and acidic residues; sequence GEKRSTKNQTKENTK. The span at 69 to 80 shows a compositional bias: polar residues; that stretch reads ANQQTNENSKPL.

This is an uncharacterized protein from Dictyostelium discoideum (Social amoeba).